Reading from the N-terminus, the 466-residue chain is Exodeoxyribonuclease 7 large subunit (466 aa).

This sequence belongs to the XseA family. Heterooligomer composed of large and small subunits.

The protein localises to the cytoplasm. The catalysed reaction is Exonucleolytic cleavage in either 5'- to 3'- or 3'- to 5'-direction to yield nucleoside 5'-phosphates.. Functionally, bidirectionally degrades single-stranded DNA into large acid-insoluble oligonucleotides, which are then degraded further into small acid-soluble oligonucleotides. The sequence is that of Exodeoxyribonuclease 7 large subunit from Ruthia magnifica subsp. Calyptogena magnifica.